A 573-amino-acid polypeptide reads, in one-letter code: Chromosomal replication initiator protein DnaA (573 aa).

The domain I, interacts with DnaA modulators stretch occupies residues 1–85 (MSQNSSSLLE…TKVLSMRMGR (85 aa)). The tract at residues 85–231 (RSFSLAVSVE…TPAHNPNREV (147 aa)) is domain II. Residues 91–232 (VSVEPSRDGE…PAHNPNREVS (142 aa)) are disordered. Over residues 116–169 (PYPGQGPQSPQGQQGQQGQHPVQQEVRAHAPAPHQQGQHQAAQHQPPANQAPGQ) the composition is skewed to low complexity. Residues 178 to 191 (QASQSAGAWEQTHS) show a composition bias toward polar residues. Residues 202-213 (SPAPVEPPPQPA) show a composition bias toward pro residues. The segment at 232-448 (SLNPKYTFEN…GALIRVSAYS (217 aa)) is domain III, AAA+ region. ATP contacts are provided by Gly-276, Gly-278, Lys-279, and Thr-280. The domain IV, binds dsDNA stretch occupies residues 449 to 573 (SLINQPIDKE…TQLIKSRGRN (125 aa)).

Belongs to the DnaA family. Oligomerizes as a right-handed, spiral filament on DNA at oriC.

Its subcellular location is the cytoplasm. Plays an essential role in the initiation and regulation of chromosomal replication. ATP-DnaA binds to the origin of replication (oriC) to initiate formation of the DNA replication initiation complex once per cell cycle. Binds the DnaA box (a 9 base pair repeat at the origin) and separates the double-stranded (ds)DNA. Forms a right-handed helical filament on oriC DNA; dsDNA binds to the exterior of the filament while single-stranded (ss)DNA is stabiized in the filament's interior. The ATP-DnaA-oriC complex binds and stabilizes one strand of the AT-rich DNA unwinding element (DUE), permitting loading of DNA polymerase. After initiation quickly degrades to an ADP-DnaA complex that is not apt for DNA replication. Binds acidic phospholipids. This is Chromosomal replication initiator protein DnaA from Corynebacterium efficiens (strain DSM 44549 / YS-314 / AJ 12310 / JCM 11189 / NBRC 100395).